A 797-amino-acid chain; its full sequence is Mitochondrial inner membrane m-AAA protease component AFG3L2 (797 aa).

A mitochondrion-targeting transit peptide spans 1–38 (MAHRCLRLWGRGGCWPRGLQQLLVPGGVGPGEQPCLRT). A propeptide spans 39-66 (LYRFVTTQARASRNSLLTDIIAAYQRFC) (removed in mature form). The Mitochondrial matrix portion of the chain corresponds to 39–142 (LYRFVTTQAR…KGDIPWDDKD (104 aa)). Positions 76 to 126 (YFPNGKNGKKASEPKEVMGEKKESKPAATTRSSGGGGGGGGKRGGKKDDSH) are disordered. Basic and acidic residues predominate over residues 85–100 (KASEPKEVMGEKKESK). Positions 108 to 117 (SGGGGGGGGK) are enriched in gly residues. Lys117 carries the N6-succinyllysine modification. A helical membrane pass occupies residues 143-163 (FRMFFLWTALFWGGVMFYLLL). Residues 164–250 (KRSGREITWK…VPVVYIAESD (87 aa)) lie on the Mitochondrial intermembrane side of the membrane. A helical transmembrane segment spans residues 251 to 271 (GSFLLSMLPTVLIIAFLLYTI). Residues 272-797 (RRGPAGIGRT…EEPPGEKVAN (526 aa)) are Mitochondrial matrix-facing. ATP-binding residues include Val310, Ala311, Thr352, Gly353, Lys354, Thr355, Leu356, and His490. Position 574 (His574) interacts with Zn(2+). Residue Glu575 is part of the active site. Residues His578 and Asp649 each coordinate Zn(2+). The segment at 759 to 797 (FVEGTGSLDEDTSLPEGLKDWNKEREKEKEEPPGEKVAN) is disordered. The segment covering 775–797 (GLKDWNKEREKEKEEPPGEKVAN) has biased composition (basic and acidic residues).

The protein in the N-terminal section; belongs to the AAA ATPase family. It in the C-terminal section; belongs to the peptidase M41 family. In terms of assembly, homohexamer. Forms heterohexamers with SPG7. The m-AAA protease is either composed of homohexamers of AFG3L2 or heterohexamers of AFG3L2 and SPG7. Interacts with MAIP1. Interacts with DNAJC19. Interacts with PHB2. The cofactor is Zn(2+). Post-translationally, upon import into the mitochondrion, the N-terminal transit peptide is cleaved to generate an intermediate form which undergoes autocatalytic proteolytic processing to generate the proteolytically active mature form. In terms of tissue distribution, ubiquitous. Highly expressed in the cerebellar Purkinje cells.

It localises to the mitochondrion inner membrane. The enzyme catalyses ATP + H2O = ADP + phosphate + H(+). Its function is as follows. Catalytic component of the m-AAA protease, a protease that plays a key role in proteostasis of inner mitochondrial membrane proteins, and which is essential for axonal and neuron development. AFG3L2 possesses both ATPase and protease activities: the ATPase activity is required to unfold substrates, threading them into the internal proteolytic cavity for hydrolysis into small peptide fragments. The m-AAA protease carries out quality control in the inner membrane of the mitochondria by mediating degradation of mistranslated or misfolded polypeptides. The m-AAA protease complex also promotes the processing and maturation of mitochondrial proteins, such as MRPL32/bL32m, PINK1 and SP7. Mediates protein maturation of the mitochondrial ribosomal subunit MRPL32/bL32m by catalyzing the cleavage of the presequence of MRPL32/bL32m prior to assembly into the mitochondrial ribosome. Required for SPG7 maturation into its active mature form after SPG7 cleavage by mitochondrial-processing peptidase (MPP). Required for the maturation of PINK1 into its 52kDa mature form after its cleavage by mitochondrial-processing peptidase (MPP). Acts as a regulator of calcium in neurons by mediating degradation of SMDT1/EMRE before its assembly with the uniporter complex, limiting the availability of SMDT1/EMRE for MCU assembly and promoting efficient assembly of gatekeeper subunits with MCU. Promotes the proteolytic degradation of GHITM upon hyperpolarization of mitochondria: progressive GHITM degradation leads to respiratory complex I degradation and broad reshaping of the mitochondrial proteome by AFG3L2. Also acts as a regulator of mitochondrial glutathione homeostasis by mediating cleavage and degradation of SLC25A39. SLC25A39 cleavage is prevented when SLC25A39 binds iron-sulfur. Involved in the regulation of OMA1-dependent processing of OPA1. May act by mediating processing of OMA1 precursor, participating in OMA1 maturation. The sequence is that of Mitochondrial inner membrane m-AAA protease component AFG3L2 from Homo sapiens (Human).